The following is a 361-amino-acid chain: Epoxyqueuosine reductase (361 aa).

The Proton donor role is filled by D147. Residues 193-222 form the 4Fe-4S ferredoxin-type domain; that stretch reads VDPAMDSEHCGRCSACLDICPTAAFVGPYR. [4Fe-4S] cluster contacts are provided by C202, C205, C208, C212, C228, C255, C258, and C262.

This sequence belongs to the QueG family. Monomer. Requires cob(II)alamin as cofactor. [4Fe-4S] cluster serves as cofactor.

The protein resides in the cytoplasm. The catalysed reaction is epoxyqueuosine(34) in tRNA + AH2 = queuosine(34) in tRNA + A + H2O. Its pathway is tRNA modification; tRNA-queuosine biosynthesis. In terms of biological role, catalyzes the conversion of epoxyqueuosine (oQ) to queuosine (Q), which is a hypermodified base found in the wobble positions of tRNA(Asp), tRNA(Asn), tRNA(His) and tRNA(Tyr). This Pseudomonas aeruginosa (strain ATCC 15692 / DSM 22644 / CIP 104116 / JCM 14847 / LMG 12228 / 1C / PRS 101 / PAO1) protein is Epoxyqueuosine reductase.